Consider the following 214-residue polypeptide: Adenylate kinase (214 aa).

An ATP-binding site is contributed by 10–15 (GAGKGT). The interval 30-59 (STGDMLRAAVKAGTPLGLEAKKVMDAGQLV) is NMP. Residues T31, R36, 57–59 (QLV), 85–88 (GFPR), and Q92 each bind AMP. The interval 122 to 159 (GRRVHPGSGRVYHIVFNQPKVEGKDDVTGEDLAIRPDD) is LID. Residues R123 and 132-133 (VY) contribute to the ATP site. The AMP site is built by R156 and R167. Q200 contacts ATP.

The protein belongs to the adenylate kinase family. In terms of assembly, monomer.

The protein localises to the cytoplasm. It catalyses the reaction AMP + ATP = 2 ADP. It participates in purine metabolism; AMP biosynthesis via salvage pathway; AMP from ADP: step 1/1. Its function is as follows. Catalyzes the reversible transfer of the terminal phosphate group between ATP and AMP. Plays an important role in cellular energy homeostasis and in adenine nucleotide metabolism. In Shewanella woodyi (strain ATCC 51908 / MS32), this protein is Adenylate kinase.